The following is a 106-amino-acid chain: MSLASRRKVRIRLYGTNPADVEQVAREIVDLAKKMGVQVRGPIPLPTRRLIVTVRRAPSGQGYHTFDHWEMRISKRLIDIEASERVLRRLMTIRVPDTVKIELQLI.

Belongs to the universal ribosomal protein uS10 family. In terms of assembly, part of the 30S ribosomal subunit.

Involved in the binding of tRNA to the ribosomes. This is Small ribosomal subunit protein uS10 from Pyrobaculum aerophilum (strain ATCC 51768 / DSM 7523 / JCM 9630 / CIP 104966 / NBRC 100827 / IM2).